Here is a 958-residue protein sequence, read N- to C-terminus: Transportin MOS14 (958 aa).

One can recognise an Importin N-terminal domain in the interval 26 to 93 (ADRWLQNFQG…RQSLTTLLKK (68 aa)).

The protein belongs to the importin beta family. As to quaternary structure, interacts with RS2Z33, RSZ21, RS31A, SR34 and RAN1.

Its subcellular location is the nucleus. Functionally, functions as a nuclear import receptor for serine-arginine rich (SR) proteins. Regulates nuclear import of SR proteins that are required for proper splicing of the two resistance (R) genes SNC1 and RPS4, a crucial step for their functions in plant immunity. This chain is Transportin MOS14, found in Arabidopsis thaliana (Mouse-ear cress).